The following is a 367-amino-acid chain: Histidinol-phosphate aminotransferase (367 aa).

Lys-225 is subject to N6-(pyridoxal phosphate)lysine.

It belongs to the class-II pyridoxal-phosphate-dependent aminotransferase family. Histidinol-phosphate aminotransferase subfamily. In terms of assembly, homodimer. The cofactor is pyridoxal 5'-phosphate.

It catalyses the reaction L-histidinol phosphate + 2-oxoglutarate = 3-(imidazol-4-yl)-2-oxopropyl phosphate + L-glutamate. It functions in the pathway amino-acid biosynthesis; L-histidine biosynthesis; L-histidine from 5-phospho-alpha-D-ribose 1-diphosphate: step 7/9. In Hyphomonas neptunium (strain ATCC 15444), this protein is Histidinol-phosphate aminotransferase.